A 237-amino-acid chain; its full sequence is Uridylate kinase (237 aa).

12–15 lines the ATP pocket; it reads KLSG. The interval 20 to 25 is involved in allosteric activation by GTP; that stretch reads GENGYG. UMP is bound at residue G54. ATP contacts are provided by G55 and R59. Residues D72 and 133–140 contribute to the UMP site; that span reads TGNPYFST. ATP contacts are provided by Y166 and D169.

Belongs to the UMP kinase family. In terms of assembly, homohexamer.

The protein resides in the cytoplasm. The enzyme catalyses UMP + ATP = UDP + ADP. The protein operates within pyrimidine metabolism; CTP biosynthesis via de novo pathway; UDP from UMP (UMPK route): step 1/1. Its activity is regulated as follows. Allosterically activated by GTP. Inhibited by UTP. Catalyzes the reversible phosphorylation of UMP to UDP. The sequence is that of Uridylate kinase from Clostridium tetani (strain Massachusetts / E88).